Consider the following 537-residue polypeptide: Zinc finger protein 703 (537 aa).

Disordered regions lie at residues 1–38, 90–254, and 300–323; these read MNCS…LRQA, SQIG…VAPV, and VGNQ…LTGA. The span at 101 to 111 shows a compositional bias: polar residues; it reads SKLNSVTSSGL. Positions 149–158 are enriched in low complexity; the sequence is GSSSGGAADK. Over residues 176-185 the composition is skewed to polar residues; that stretch reads SPSSRVSSPG. Basic and acidic residues predominate over residues 188–203; sequence CDSKNNESQEKKEPEA. The span at 205-220 shows a compositional bias: polar residues; that stretch reads KANSETSQVNPTLTRA. Over residues 221–232 the composition is skewed to low complexity; the sequence is STSNSSAESSQS. The segment at 409–437 adopts a C2H2-type zinc-finger fold; it reads HICNWVSASGPCDKRFSTSEELLAHLRTH.

The protein belongs to the Elbow/Noc family.

The protein localises to the nucleus. It localises to the cytoplasm. In terms of biological role, transcriptional corepressor which does not bind directly to DNA and may regulate transcription through recruitment of histone deacetylases to gene promoters. Regulates cell adhesion, migration and proliferation. Involved in specification of the lateral neural plate border (NPB). May be required for segmental gene expression during hindbrain development. This chain is Zinc finger protein 703 (znf703), found in Xenopus tropicalis (Western clawed frog).